Reading from the N-terminus, the 226-residue chain is V-type proton ATPase subunit E (226 aa).

This sequence belongs to the V-ATPase E subunit family. V-ATPase is a heteromultimeric enzyme made up of two complexes: the ATP-hydrolytic V1 complex and the proton translocation V0 complex. The V1 complex consists of three catalytic AB heterodimers that form a heterohexamer, three peripheral stalks each consisting of EG heterodimers, one central rotor including subunits D and F, and the regulatory subunits C and H. The proton translocation complex V0 consists of the proton transport subunit a, a ring of proteolipid subunits c9c'', rotary subunit d, subunits e and f, and the accessory subunits vah-19/Ac45 and vah-20/PRR. In terms of tissue distribution, expressed in the excretory cell and syncytial hypodermal cells (at protein level). Expressed in the intestine (at protein level).

Its subcellular location is the cytoplasm. The protein localises to the apical cell membrane. In terms of biological role, subunit of the V1 complex of vacuolar(H+)-ATPase (V-ATPase), a multisubunit enzyme composed of a peripheral complex (V1) that hydrolyzes ATP and a membrane integral complex (V0) that translocates protons. V-ATPase is responsible for acidifying and maintaining the pH of intracellular compartments and in some cell types, is targeted to the plasma membrane, where it is responsible for acidifying the extracellular environment. Regulates pH homeostasis in the intestine. Probably by regulating cytoplasmic pH, required for cell survival in the intestine and hypodermis. Involved in receptor-mediated endocytosis. Involved in embryogenesis and larval development. The polypeptide is V-type proton ATPase subunit E (Caenorhabditis elegans).